The chain runs to 702 residues: Phosphoribosylformylglycinamidine synthase subunit PurL (702 aa).

The active site involves His-36. ATP is bound by residues Tyr-39 and Lys-80. Residue Glu-82 participates in Mg(2+) binding. Substrate contacts are provided by residues 83–86 and Arg-105; that span reads SHNH. Catalysis depends on His-84, which acts as the Proton acceptor. Asp-106 is a Mg(2+) binding site. Position 225 (Gln-225) interacts with substrate. Asp-251 serves as a coordination point for Mg(2+). Residue 293 to 295 participates in substrate binding; the sequence is ETQ. Asp-468 and Gly-505 together coordinate ATP. Ser-508 is a binding site for substrate.

The protein belongs to the FGAMS family. Monomer. Part of the FGAM synthase complex composed of 1 PurL, 1 PurQ and 2 PurS subunits.

The protein resides in the cytoplasm. It carries out the reaction N(2)-formyl-N(1)-(5-phospho-beta-D-ribosyl)glycinamide + L-glutamine + ATP + H2O = 2-formamido-N(1)-(5-O-phospho-beta-D-ribosyl)acetamidine + L-glutamate + ADP + phosphate + H(+). It participates in purine metabolism; IMP biosynthesis via de novo pathway; 5-amino-1-(5-phospho-D-ribosyl)imidazole from N(2)-formyl-N(1)-(5-phospho-D-ribosyl)glycinamide: step 1/2. In terms of biological role, part of the phosphoribosylformylglycinamidine synthase complex involved in the purines biosynthetic pathway. Catalyzes the ATP-dependent conversion of formylglycinamide ribonucleotide (FGAR) and glutamine to yield formylglycinamidine ribonucleotide (FGAM) and glutamate. The FGAM synthase complex is composed of three subunits. PurQ produces an ammonia molecule by converting glutamine to glutamate. PurL transfers the ammonia molecule to FGAR to form FGAM in an ATP-dependent manner. PurS interacts with PurQ and PurL and is thought to assist in the transfer of the ammonia molecule from PurQ to PurL. The sequence is that of Phosphoribosylformylglycinamidine synthase subunit PurL from Metallosphaera sedula (strain ATCC 51363 / DSM 5348 / JCM 9185 / NBRC 15509 / TH2).